Consider the following 207-residue polypeptide: Sodium/potassium-transporting ATPase subunit beta-1-interacting protein 1 (207 aa).

The next 3 membrane-spanning stretches (helical) occupy residues Gly-2 to Leu-22, Ala-35 to Val-55, and Leu-62 to Phe-82. Asn-100 carries an N-linked (GlcNAc...) asparagine glycan. A helical membrane pass occupies residues Ala-147–Val-167.

This sequence belongs to the NKAIN family. Interacts with ATP1B1 C-terminus. Detected in the brain only and specifically in neurons. Expressed in multiple regions such as cerebral cortex, thalamus, hippocampus, olfactory bulb and brainstem as well as in cerebellum with high expression in granular cell layer.

It localises to the cell membrane. The polypeptide is Sodium/potassium-transporting ATPase subunit beta-1-interacting protein 1 (Nkain1) (Mus musculus (Mouse)).